We begin with the raw amino-acid sequence, 473 residues long: Photosystem II CP43 reaction center protein (473 aa).

Positions 1-14 (MKTLYSLRRFYHVE) are excised as a propeptide. Residue T15 is modified to N-acetylthreonine. Phosphothreonine is present on T15. 5 helical membrane passes run 69–93 (LFEV…PHLA), 134–155 (LLGP…KDRN), 178–200 (KALY…RKIT), 255–275 (KPFA…LSYS), and 291–312 (WFNN…ASQA). E367 contacts [CaMn4O5] cluster. Residues 447 to 471 (RARAAAAGFEKGIDRDFEPVLSMTP) traverse the membrane as a helical segment.

It belongs to the PsbB/PsbC family. PsbC subfamily. As to quaternary structure, PSII is composed of 1 copy each of membrane proteins PsbA, PsbB, PsbC, PsbD, PsbE, PsbF, PsbH, PsbI, PsbJ, PsbK, PsbL, PsbM, PsbT, PsbX, PsbY, PsbZ, Psb30/Ycf12, at least 3 peripheral proteins of the oxygen-evolving complex and a large number of cofactors. It forms dimeric complexes. Requires Binds multiple chlorophylls and provides some of the ligands for the Ca-4Mn-5O cluster of the oxygen-evolving complex. It may also provide a ligand for a Cl- that is required for oxygen evolution. PSII binds additional chlorophylls, carotenoids and specific lipids. as cofactor.

It localises to the plastid. Its subcellular location is the chloroplast thylakoid membrane. In terms of biological role, one of the components of the core complex of photosystem II (PSII). It binds chlorophyll and helps catalyze the primary light-induced photochemical processes of PSII. PSII is a light-driven water:plastoquinone oxidoreductase, using light energy to abstract electrons from H(2)O, generating O(2) and a proton gradient subsequently used for ATP formation. The chain is Photosystem II CP43 reaction center protein from Capsella bursa-pastoris (Shepherd's purse).